Consider the following 248-residue polypeptide: Adenosylcobinamide-GDP ribazoletransferase (248 aa).

5 helical membrane-spanning segments follow: residues 30–50, 54–74, 112–132, 134–154, and 188–208; these read LAESFSFFPLVGLILGFCYAL, VLSGVVPSLLLAVAITALTAV, FGALAIALAVAFKVAALDAVI, AGSFLPLLLVPVVSRLAMVLA, and AVSAFLVQPVFGLCALVLAAG.

The protein belongs to the CobS family. Mg(2+) is required as a cofactor.

The protein resides in the cell inner membrane. The catalysed reaction is alpha-ribazole + adenosylcob(III)inamide-GDP = adenosylcob(III)alamin + GMP + H(+). It catalyses the reaction alpha-ribazole 5'-phosphate + adenosylcob(III)inamide-GDP = adenosylcob(III)alamin 5'-phosphate + GMP + H(+). The protein operates within cofactor biosynthesis; adenosylcobalamin biosynthesis; adenosylcobalamin from cob(II)yrinate a,c-diamide: step 7/7. Its function is as follows. Joins adenosylcobinamide-GDP and alpha-ribazole to generate adenosylcobalamin (Ado-cobalamin). Also synthesizes adenosylcobalamin 5'-phosphate from adenosylcobinamide-GDP and alpha-ribazole 5'-phosphate. This chain is Adenosylcobinamide-GDP ribazoletransferase, found in Syntrophobacter fumaroxidans (strain DSM 10017 / MPOB).